Consider the following 196-residue polypeptide: Nucleoid occlusion factor SlmA (196 aa).

The region spanning 7–68 (SNRREEILQA…GLIEFIEEAL (62 aa)) is the HTH tetR-type domain. The H-T-H motif DNA-binding region spans 31–50 (TTAKLAQQVGVSEAALYRHF). Residues 65–142 (EEALMSRINR…QLRQILRERK (78 aa)) are a coiled coil.

It belongs to the nucleoid occlusion factor SlmA family. As to quaternary structure, homodimer. Interacts with FtsZ.

The protein localises to the cytoplasm. Its subcellular location is the nucleoid. Its function is as follows. Required for nucleoid occlusion (NO) phenomenon, which prevents Z-ring formation and cell division over the nucleoid. Acts as a DNA-associated cell division inhibitor that binds simultaneously chromosomal DNA and FtsZ, and disrupts the assembly of FtsZ polymers. SlmA-DNA-binding sequences (SBS) are dispersed on non-Ter regions of the chromosome, preventing FtsZ polymerization at these regions. In Vibrio vulnificus (strain CMCP6), this protein is Nucleoid occlusion factor SlmA.